A 192-amino-acid chain; its full sequence is Fe/S biogenesis protein NfuA (192 aa).

[4Fe-4S] cluster contacts are provided by C150 and C153.

Belongs to the NfuA family. As to quaternary structure, homodimer. [4Fe-4S] cluster is required as a cofactor.

In terms of biological role, involved in iron-sulfur cluster biogenesis. Binds a 4Fe-4S cluster, can transfer this cluster to apoproteins, and thereby intervenes in the maturation of Fe/S proteins. Could also act as a scaffold/chaperone for damaged Fe/S proteins. The protein is Fe/S biogenesis protein NfuA of Buchnera aphidicola subsp. Acyrthosiphon pisum (strain APS) (Acyrthosiphon pisum symbiotic bacterium).